A 610-amino-acid polypeptide reads, in one-letter code: Elongation factor 4 (610 aa).

A tr-type G domain is found at 11–193 (EKIRNFSIIA…QIVEKVPAPS (183 aa)). GTP-binding positions include 23–28 (DHGKST) and 140–143 (NKID).

This sequence belongs to the TRAFAC class translation factor GTPase superfamily. Classic translation factor GTPase family. LepA subfamily.

It localises to the cell membrane. It carries out the reaction GTP + H2O = GDP + phosphate + H(+). In terms of biological role, required for accurate and efficient protein synthesis under certain stress conditions. May act as a fidelity factor of the translation reaction, by catalyzing a one-codon backward translocation of tRNAs on improperly translocated ribosomes. Back-translocation proceeds from a post-translocation (POST) complex to a pre-translocation (PRE) complex, thus giving elongation factor G a second chance to translocate the tRNAs correctly. Binds to ribosomes in a GTP-dependent manner. The polypeptide is Elongation factor 4 (Streptococcus uberis (strain ATCC BAA-854 / 0140J)).